The chain runs to 204 residues: Leucyl/phenylalanyl-tRNA--protein transferase (204 aa).

This sequence belongs to the L/F-transferase family.

It is found in the cytoplasm. The catalysed reaction is N-terminal L-lysyl-[protein] + L-leucyl-tRNA(Leu) = N-terminal L-leucyl-L-lysyl-[protein] + tRNA(Leu) + H(+). The enzyme catalyses N-terminal L-arginyl-[protein] + L-leucyl-tRNA(Leu) = N-terminal L-leucyl-L-arginyl-[protein] + tRNA(Leu) + H(+). It carries out the reaction L-phenylalanyl-tRNA(Phe) + an N-terminal L-alpha-aminoacyl-[protein] = an N-terminal L-phenylalanyl-L-alpha-aminoacyl-[protein] + tRNA(Phe). Its function is as follows. Functions in the N-end rule pathway of protein degradation where it conjugates Leu, Phe and, less efficiently, Met from aminoacyl-tRNAs to the N-termini of proteins containing an N-terminal arginine or lysine. The polypeptide is Leucyl/phenylalanyl-tRNA--protein transferase (Rhizobium meliloti (strain 1021) (Ensifer meliloti)).